The sequence spans 243 residues: Terpene cyclase paxB (243 aa).

The next 7 helical transmembrane spans lie at 23-43 (FVVG…YISF), 49-69 (GMSI…CLVF), 78-98 (GVFW…ITFS), 112-132 (ISLI…ALAL), 134-154 (IGPA…LSVG), 172-194 (LWAS…WMYW), and 205-225 (LVLW…ICFW).

The protein belongs to the paxB family.

The protein resides in the membrane. The protein operates within secondary metabolite biosynthesis. Terpene cyclase; part of the ATM2 gene cluster that mediates the biosynthesis of paxilline, a mycotoxin that acts as an inhibitor of mammalian maxi-K channels. PaxG, the geranylgeranyl diphosphate (GGPP) synthase is proposed to catalyze the first step in paxilline biosynthesis. Condensation of indole-3-glycerol phosphate with GGPP by paxC then forms 3-geranylgeranylindole (3-GGI), followed by epoxidation and cyclization of this intermediate (by paxM and paxB) to form paspaline. Paspaline is subsequently converted to 13-desoxypaxilline by paxP, the latter being then converted to paxilline by paxQ. Finally paxilline can be mono- and di-prenylated by paxD. In Penicillium paxilli, this protein is Terpene cyclase paxB.